Reading from the N-terminus, the 105-residue chain is Large ribosomal subunit protein bL21 (105 aa).

Belongs to the bacterial ribosomal protein bL21 family. Part of the 50S ribosomal subunit. Contacts protein L20.

Functionally, this protein binds to 23S rRNA in the presence of protein L20. The protein is Large ribosomal subunit protein bL21 of Rickettsia bellii (strain OSU 85-389).